Reading from the N-terminus, the 297-residue chain is Rhomboid-type serine protease 2 (297 aa).

6 helical membrane-spanning segments follow: residues 14-34 (IQHP…IFLL), 60-80 (ISFY…LVAL), 98-118 (IVLN…SIGF), 120-140 (PDEA…YWAI), 155-175 (LVVP…IVIP), and 179-199 (FIGH…YLDV). The active-site Nucleophile is Ser128. His182 is an active-site residue. The segment at 268–297 (DLEAGTRSRGNSSVDPTTSFPGTGQTLGTQ) is disordered. The segment covering 275 to 297 (SRGNSSVDPTTSFPGTGQTLGTQ) has biased composition (polar residues).

The protein belongs to the peptidase S54 family.

It is found in the golgi apparatus membrane. The protein resides in the golgi apparatus. Its subcellular location is the cis-Golgi network membrane. The enzyme catalyses Cleaves type-1 transmembrane domains using a catalytic dyad composed of serine and histidine that are contributed by different transmembrane domains.. Its function is as follows. Probable rhomboid-type serine protease that catalyzes intramembrane proteolysis. The chain is Rhomboid-type serine protease 2 (RBD2) from Yarrowia lipolytica (strain CLIB 122 / E 150) (Yeast).